The chain runs to 1004 residues: Retrovirus-related Pol polyprotein from type-1 retrotransposable element R1 (1004 aa).

One can recognise a Reverse transcriptase domain in the interval 450–717 (QCLLESYFPQ…SEVKHLGIFV (268 aa)). Residues 853 to 1004 (LSGSQFKELL…RLMRGMRIRE (152 aa)) form a nucleic acid-binding endonuclease region.

It carries out the reaction DNA(n) + a 2'-deoxyribonucleoside 5'-triphosphate = DNA(n+1) + diphosphate. The polypeptide is Retrovirus-related Pol polyprotein from type-1 retrotransposable element R1 (Bradysia coprophila (Dark-winged fungus gnat)).